A 194-amino-acid chain; its full sequence is A-type ATP synthase subunit E (194 aa).

Belongs to the V-ATPase E subunit family. In terms of assembly, has multiple subunits with at least A(3), B(3), C, D, E, F, H, I and proteolipid K(x).

The protein resides in the cell membrane. In terms of biological role, component of the A-type ATP synthase that produces ATP from ADP in the presence of a proton gradient across the membrane. In Saccharolobus solfataricus (strain ATCC 35092 / DSM 1617 / JCM 11322 / P2) (Sulfolobus solfataricus), this protein is A-type ATP synthase subunit E.